The following is a 185-amino-acid chain: Peptidyl-tRNA hydrolase (185 aa).

Residue tyrosine 14 participates in tRNA binding. Histidine 19 serves as the catalytic Proton acceptor. Positions 64, 66, and 112 each coordinate tRNA.

It belongs to the PTH family. Monomer.

It is found in the cytoplasm. It catalyses the reaction an N-acyl-L-alpha-aminoacyl-tRNA + H2O = an N-acyl-L-amino acid + a tRNA + H(+). Functionally, hydrolyzes ribosome-free peptidyl-tRNAs (with 1 or more amino acids incorporated), which drop off the ribosome during protein synthesis, or as a result of ribosome stalling. Catalyzes the release of premature peptidyl moieties from peptidyl-tRNA molecules trapped in stalled 50S ribosomal subunits, and thus maintains levels of free tRNAs and 50S ribosomes. This chain is Peptidyl-tRNA hydrolase, found in Caldanaerobacter subterraneus subsp. tengcongensis (strain DSM 15242 / JCM 11007 / NBRC 100824 / MB4) (Thermoanaerobacter tengcongensis).